The sequence spans 66 residues: UPF0337 protein bsl1473 (66 aa).

It belongs to the UPF0337 (CsbD) family.

The polypeptide is UPF0337 protein bsl1473 (Bradyrhizobium diazoefficiens (strain JCM 10833 / BCRC 13528 / IAM 13628 / NBRC 14792 / USDA 110)).